The chain runs to 639 residues: tRNA 5-methylaminomethyl-2-thiouridine biosynthesis bifunctional protein MnmC (639 aa).

Residues 1-228 (MSEPIEWLED…KRDNLQATYA (228 aa)) form a tRNA (mnm(5)s(2)U34)-methyltransferase region. Residues 254-639 (VGAGLAGAAV…SERWLGYEPQ (386 aa)) are FAD-dependent cmnm(5)s(2)U34 oxidoreductase.

It in the N-terminal section; belongs to the methyltransferase superfamily. tRNA (mnm(5)s(2)U34)-methyltransferase family. In the C-terminal section; belongs to the DAO family. FAD serves as cofactor.

Its subcellular location is the cytoplasm. It carries out the reaction 5-aminomethyl-2-thiouridine(34) in tRNA + S-adenosyl-L-methionine = 5-methylaminomethyl-2-thiouridine(34) in tRNA + S-adenosyl-L-homocysteine + H(+). Catalyzes the last two steps in the biosynthesis of 5-methylaminomethyl-2-thiouridine (mnm(5)s(2)U) at the wobble position (U34) in tRNA. Catalyzes the FAD-dependent demodification of cmnm(5)s(2)U34 to nm(5)s(2)U34, followed by the transfer of a methyl group from S-adenosyl-L-methionine to nm(5)s(2)U34, to form mnm(5)s(2)U34. The protein is tRNA 5-methylaminomethyl-2-thiouridine biosynthesis bifunctional protein MnmC of Acidovorax sp. (strain JS42).